Reading from the N-terminus, the 403-residue chain is MKAQRRFGLALSWARLTTVFVIDLLILIVASHCPDSWQGENRIAWWVGVGIAVLVTLLSVVTYRGITVTSGITAWLWDWSADPGTALGAGCTPAVDHQRRFGRDTVGVREHHGRLVTVITVDDGEGDAAGRHRHRTTQSAVVPVATVAENLRQFDVQLDGVDIVTVEVRGGAEAARASASLDEWGPEEWGMVGESPAANRRRTWLILRMNPQRNVAAIASRDSLASTLVTATERLAQVLDGQSCAARPLAADELAEVDSAILAELEPTWSRPGWRHLKHFNGYATSFWVTPADINAETLDEVWLSDAPEVGATVLTLRLVMRAGEPRLSAWVRYHSDERLPKELSVGLNRLTGRQLAAVRASLPVPSTRAQLVVSSRELLDHDELELPVGQTQEHATSATTGQ.

Helical transmembrane passes span 9-29 (LALS…ILIV) and 43-63 (IAWW…VVTY).

This sequence belongs to the EccE family. Part of the ESX-5 / type VII secretion system (T7SS), which is composed of cytosolic and membrane components. The ESX-5 membrane complex is composed of EccB5, EccC5, EccD5 and EccE5.

The protein localises to the cell inner membrane. Functionally, part of the ESX-5 specialized secretion system, which is responsible for the secretion of EsxN and a number of PE_PGRS and PPE proteins. The sequence is that of ESX-5 secretion system protein EccE5 from Mycobacterium marinum (strain ATCC BAA-535 / M).